Reading from the N-terminus, the 467-residue chain is ATP synthase subunit beta (467 aa).

154–161 (GGAGVGKT) contacts ATP.

This sequence belongs to the ATPase alpha/beta chains family. F-type ATPases have 2 components, CF(1) - the catalytic core - and CF(0) - the membrane proton channel. CF(1) has five subunits: alpha(3), beta(3), gamma(1), delta(1), epsilon(1). CF(0) has three main subunits: a(1), b(2) and c(9-12). The alpha and beta chains form an alternating ring which encloses part of the gamma chain. CF(1) is attached to CF(0) by a central stalk formed by the gamma and epsilon chains, while a peripheral stalk is formed by the delta and b chains.

The protein resides in the cell inner membrane. The enzyme catalyses ATP + H2O + 4 H(+)(in) = ADP + phosphate + 5 H(+)(out). Functionally, produces ATP from ADP in the presence of a proton gradient across the membrane. The catalytic sites are hosted primarily by the beta subunits. The polypeptide is ATP synthase subunit beta (Leptospira borgpetersenii serovar Hardjo-bovis (strain JB197)).